The sequence spans 293 residues: 4-hydroxy-tetrahydrodipicolinate synthase (293 aa).

Residue Thr47 participates in pyruvate binding. Residue Tyr136 is the Proton donor/acceptor of the active site. The active-site Schiff-base intermediate with substrate is Lys164. Ile206 is a pyruvate binding site.

Belongs to the DapA family. In terms of assembly, homotetramer; dimer of dimers.

The protein resides in the cytoplasm. It catalyses the reaction L-aspartate 4-semialdehyde + pyruvate = (2S,4S)-4-hydroxy-2,3,4,5-tetrahydrodipicolinate + H2O + H(+). It participates in amino-acid biosynthesis; L-lysine biosynthesis via DAP pathway; (S)-tetrahydrodipicolinate from L-aspartate: step 3/4. In terms of biological role, catalyzes the condensation of (S)-aspartate-beta-semialdehyde [(S)-ASA] and pyruvate to 4-hydroxy-tetrahydrodipicolinate (HTPA). The chain is 4-hydroxy-tetrahydrodipicolinate synthase from Listeria monocytogenes serotype 4a (strain HCC23).